We begin with the raw amino-acid sequence, 500 residues long: Cytochrome P450 2C11 (500 aa).

Cysteine 435 contributes to the heme binding site.

The protein belongs to the cytochrome P450 family. It depends on heme as a cofactor. In terms of tissue distribution, liver and kidney; male-specific.

Its subcellular location is the endoplasmic reticulum membrane. The protein resides in the microsome membrane. It carries out the reaction an organic molecule + reduced [NADPH--hemoprotein reductase] + O2 = an alcohol + oxidized [NADPH--hemoprotein reductase] + H2O + H(+). The enzyme catalyses testosterone + reduced [NADPH--hemoprotein reductase] + O2 = 2alpha,17beta-dihydroxyandrost-4-en-3-one + oxidized [NADPH--hemoprotein reductase] + H2O + H(+). The catalysed reaction is testosterone + reduced [NADPH--hemoprotein reductase] + O2 = 16alpha,17beta-dihydroxyandrost-4-en-3-one + oxidized [NADPH--hemoprotein reductase] + H2O + H(+). It catalyses the reaction (5Z,8Z,11Z,14Z)-eicosatetraenoate + reduced [NADPH--hemoprotein reductase] + O2 = (8R,9S)-epoxy-(5Z,11Z,14Z)-eicosatrienoate + oxidized [NADPH--hemoprotein reductase] + H2O + H(+). It carries out the reaction (5Z,8Z,11Z,14Z)-eicosatetraenoate + reduced [NADPH--hemoprotein reductase] + O2 = (8S,9R)-epoxy-(5Z,11Z,14Z)-eicosatrienoate + oxidized [NADPH--hemoprotein reductase] + H2O + H(+). The enzyme catalyses (5Z,8Z,11Z,14Z)-eicosatetraenoate + reduced [NADPH--hemoprotein reductase] + O2 = (11R,12S)-epoxy-(5Z,8Z,14Z)-eicosatrienoate + oxidized [NADPH--hemoprotein reductase] + H2O + H(+). The catalysed reaction is (5Z,8Z,11Z,14Z)-eicosatetraenoate + reduced [NADPH--hemoprotein reductase] + O2 = (11S,12R)-epoxy-(5Z,8Z,14Z)-eicosatrienoate + oxidized [NADPH--hemoprotein reductase] + H2O + H(+). It catalyses the reaction (5Z,8Z,11Z,14Z)-eicosatetraenoate + reduced [NADPH--hemoprotein reductase] + O2 = (14R,15S)-epoxy-(5Z,8Z,11Z)-eicosatrienoate + oxidized [NADPH--hemoprotein reductase] + H2O + H(+). It carries out the reaction (5Z,8Z,11Z,14Z)-eicosatetraenoate + reduced [NADPH--hemoprotein reductase] + O2 = (14S,15R)-epoxy-(5Z,8Z,11Z)-eicosatrienoate + oxidized [NADPH--hemoprotein reductase] + H2O + H(+). The enzyme catalyses (5Z,8Z,11Z,14Z,17Z)-eicosapentaenoate + reduced [NADPH--hemoprotein reductase] + O2 = 8,9-epoxy-(5Z,11Z,14Z,17Z)-eicosatetraenoate + oxidized [NADPH--hemoprotein reductase] + H2O + H(+). The catalysed reaction is (5Z,8Z,11Z,14Z,17Z)-eicosapentaenoate + reduced [NADPH--hemoprotein reductase] + O2 = 11,12-epoxy-(5Z,8Z,14Z,17Z)-eicosatetraenoate + oxidized [NADPH--hemoprotein reductase] + H2O + H(+). It catalyses the reaction (5Z,8Z,11Z,14Z,17Z)-eicosapentaenoate + reduced [NADPH--hemoprotein reductase] + O2 = 14,15-epoxy-(5Z,8Z,11Z,17Z)-eicosatetraenoate + oxidized [NADPH--hemoprotein reductase] + H2O + H(+). It carries out the reaction (5Z,8Z,11Z,14Z,17Z)-eicosapentaenoate + reduced [NADPH--hemoprotein reductase] + O2 = (17S,18R)-epoxy-(5Z,8Z,11Z,14Z)-eicosatetraenoate + oxidized [NADPH--hemoprotein reductase] + H2O + H(+). The enzyme catalyses (5Z,8Z,11Z,14Z,17Z)-eicosapentaenoate + reduced [NADPH--hemoprotein reductase] + O2 = (17R,18S)-epoxy-(5Z,8Z,11Z,14Z)-eicosatetraenoate + oxidized [NADPH--hemoprotein reductase] + H2O + H(+). It functions in the pathway lipid metabolism; arachidonate metabolism. The protein operates within steroid metabolism. In terms of biological role, a cytochrome P450 monooxygenase involved in the metabolism of steroid hormones and fatty acids. Catalyzes the hydroxylation of carbon-hydrogen bonds. Metabolizes testosterone to 2alpha- and 16alpha-hydroxytestosterone. Catalyzes the epoxidation of double bonds of polyunsaturated fatty acids (PUFAs). Converts arachidonic acid (ARA, C20:4(n-6)) primarily to epoxyeicosatrienoic acid (EET) regioisomers, 8,9-, 11,12-, and 14,15-EET, with both R,S and S,R stereochemistry. Preferentially produces 11R,12S-EET enantiomer. To a lesser extent, catalyzes the hydroxylation of arachidonic acid producing hydroxyeicosatetraenoates (HETEs). Metabolizes eicosapentaenoic acid (EPA, C20:5(n-3)) to epoxyeicosatetraenoic acid (EETeTr) regioisomers, 8,9-, 11,12-, 14,15-, and 17,18-EETeTr, preferentially producing 17R,18S-EETeTr enantiomer. Mechanistically, uses molecular oxygen inserting one oxygen atom into a substrate, and reducing the second into a water molecule, with two electrons provided by NADPH via cytochrome P450 reductase (NADPH--hemoprotein reductase). In Rattus norvegicus (Rat), this protein is Cytochrome P450 2C11 (Cyp2c11).